A 214-amino-acid chain; its full sequence is Large ribosomal subunit protein uL3 (214 aa).

The interval 133–155 is disordered; that stretch reads ATHGNSRSHRVPGSTGQCQSPGR. Gln151 bears the N5-methylglutamine mark.

It belongs to the universal ribosomal protein uL3 family. In terms of assembly, part of the 50S ribosomal subunit. Forms a cluster with proteins L14 and L19. Post-translationally, methylated by PrmB.

One of the primary rRNA binding proteins, it binds directly near the 3'-end of the 23S rRNA, where it nucleates assembly of the 50S subunit. This chain is Large ribosomal subunit protein uL3, found in Cellvibrio japonicus (strain Ueda107) (Pseudomonas fluorescens subsp. cellulosa).